The primary structure comprises 696 residues: Glycine--tRNA ligase beta subunit (696 aa).

The protein belongs to the class-II aminoacyl-tRNA synthetase family. As to quaternary structure, tetramer of two alpha and two beta subunits.

The protein localises to the cytoplasm. The catalysed reaction is tRNA(Gly) + glycine + ATP = glycyl-tRNA(Gly) + AMP + diphosphate. This chain is Glycine--tRNA ligase beta subunit, found in Oleidesulfovibrio alaskensis (strain ATCC BAA-1058 / DSM 17464 / G20) (Desulfovibrio alaskensis).